The sequence spans 642 residues: Chaperone protein HtpG (642 aa).

The a; substrate-binding stretch occupies residues 1–348 (MSTKIEQLEF…AQDLSLNVSR (348 aa)). The segment at 349 to 564 (EILQQDRQIR…AFSMSPALER (216 aa)) is b. Residues 565 to 642 (MYRASGQPVP…MLANRLARTV (78 aa)) are c.

This sequence belongs to the heat shock protein 90 family. In terms of assembly, homodimer.

The protein resides in the cytoplasm. Its function is as follows. Molecular chaperone. Has ATPase activity. In Rhodococcus jostii (strain RHA1), this protein is Chaperone protein HtpG.